A 350-amino-acid chain; its full sequence is tRNA dimethylallyltransferase (350 aa).

Glycine 34–threonine 41 is an ATP binding site. Threonine 36–threonine 41 is a substrate binding site. 3 interaction with substrate tRNA regions span residues aspartate 63–leucine 66, glutamine 187–arginine 191, and arginine 274–arginine 279.

This sequence belongs to the IPP transferase family. In terms of assembly, monomer. It depends on Mg(2+) as a cofactor.

The enzyme catalyses adenosine(37) in tRNA + dimethylallyl diphosphate = N(6)-dimethylallyladenosine(37) in tRNA + diphosphate. Catalyzes the transfer of a dimethylallyl group onto the adenine at position 37 in tRNAs that read codons beginning with uridine, leading to the formation of N6-(dimethylallyl)adenosine (i(6)A). The chain is tRNA dimethylallyltransferase from Paracidovorax citrulli (strain AAC00-1) (Acidovorax citrulli).